Consider the following 469-residue polypeptide: Aspartyl/glutamyl-tRNA(Asn/Gln) amidotransferase subunit B (469 aa).

It belongs to the GatB/GatE family. GatB subfamily. In terms of assembly, heterotrimer of A, B and C subunits.

The enzyme catalyses L-glutamyl-tRNA(Gln) + L-glutamine + ATP + H2O = L-glutaminyl-tRNA(Gln) + L-glutamate + ADP + phosphate + H(+). The catalysed reaction is L-aspartyl-tRNA(Asn) + L-glutamine + ATP + H2O = L-asparaginyl-tRNA(Asn) + L-glutamate + ADP + phosphate + 2 H(+). In terms of biological role, allows the formation of correctly charged Asn-tRNA(Asn) or Gln-tRNA(Gln) through the transamidation of misacylated Asp-tRNA(Asn) or Glu-tRNA(Gln) in organisms which lack either or both of asparaginyl-tRNA or glutaminyl-tRNA synthetases. The reaction takes place in the presence of glutamine and ATP through an activated phospho-Asp-tRNA(Asn) or phospho-Glu-tRNA(Gln). The sequence is that of Aspartyl/glutamyl-tRNA(Asn/Gln) amidotransferase subunit B from Methanococcus vannielii (strain ATCC 35089 / DSM 1224 / JCM 13029 / OCM 148 / SB).